We begin with the raw amino-acid sequence, 523 residues long: Bifunctional purine biosynthesis protein PurH (523 aa).

Residues Asp-4–Thr-152 form the MGS-like domain.

It belongs to the PurH family.

It catalyses the reaction (6R)-10-formyltetrahydrofolate + 5-amino-1-(5-phospho-beta-D-ribosyl)imidazole-4-carboxamide = 5-formamido-1-(5-phospho-D-ribosyl)imidazole-4-carboxamide + (6S)-5,6,7,8-tetrahydrofolate. It carries out the reaction IMP + H2O = 5-formamido-1-(5-phospho-D-ribosyl)imidazole-4-carboxamide. Its pathway is purine metabolism; IMP biosynthesis via de novo pathway; 5-formamido-1-(5-phospho-D-ribosyl)imidazole-4-carboxamide from 5-amino-1-(5-phospho-D-ribosyl)imidazole-4-carboxamide (10-formyl THF route): step 1/1. It participates in purine metabolism; IMP biosynthesis via de novo pathway; IMP from 5-formamido-1-(5-phospho-D-ribosyl)imidazole-4-carboxamide: step 1/1. The sequence is that of Bifunctional purine biosynthesis protein PurH from Mycobacterium ulcerans (strain Agy99).